Reading from the N-terminus, the 199-residue chain is Ubiquitin-conjugating enzyme E2-22 kDa (199 aa).

The region spanning 4 to 154 (MAVSRIKREF…AKHWTNAYAG (151 aa)) is the UBC core domain. Cysteine 92 functions as the Glycyl thioester intermediate in the catalytic mechanism. A UBA domain is found at 161-199 (DCDSKIQRLRDMGIDEHEARAVLSKENWNLEKATEGLFS).

The protein belongs to the ubiquitin-conjugating enzyme family. In terms of assembly, interacts with Rpn10. As to expression, during gastrulation, expression is highest in the invaginating posterior midgut primordium (PMG), high expression is also observed in the cephalic furrow and ventral ectodermal neurogenic region. In stage 10-11 embryos, expression is high in the pole cells present in the pocket formed by the PMG. During germ band retraction, expression appears to reinitiate in many tissues, especially the gut and nervous system. After dorsal closure, expression is detectable at low levels throughout the embryo.

It carries out the reaction S-ubiquitinyl-[E1 ubiquitin-activating enzyme]-L-cysteine + [E2 ubiquitin-conjugating enzyme]-L-cysteine = [E1 ubiquitin-activating enzyme]-L-cysteine + S-ubiquitinyl-[E2 ubiquitin-conjugating enzyme]-L-cysteine.. Its pathway is protein modification; protein ubiquitination. Functionally, catalyzes the covalent attachment of ubiquitin to other proteins. The sequence is that of Ubiquitin-conjugating enzyme E2-22 kDa from Drosophila melanogaster (Fruit fly).